Here is a 541-residue protein sequence, read N- to C-terminus: Membrane protein insertase YidC (541 aa).

Transmembrane regions (helical) follow at residues 6–26, 326–346, 349–369, 420–440, 457–477, and 500–520; these read NLLL…WESD, VVDY…LMFF, LVHN…GLLY, GGCL…WVLL, LSVQ…MWAM, and MIFT…WLVG.

This sequence belongs to the OXA1/ALB3/YidC family. Type 1 subfamily. Interacts with the Sec translocase complex via SecD. Specifically interacts with transmembrane segments of nascent integral membrane proteins during membrane integration.

It localises to the cell inner membrane. Functionally, required for the insertion and/or proper folding and/or complex formation of integral membrane proteins into the membrane. Involved in integration of membrane proteins that insert both dependently and independently of the Sec translocase complex, as well as at least some lipoproteins. Aids folding of multispanning membrane proteins. This is Membrane protein insertase YidC from Shewanella amazonensis (strain ATCC BAA-1098 / SB2B).